The sequence spans 101 residues: MADPRRPARVTRYKPPTTESNPALEDPTPDYMNLLGMVFSMCGLMLKLKWCAWIAVYCSFISFANSRSSEDTKQMMSSFMLSISAVVMSYLQNPQPMSPPW.

The disordered stretch occupies residues 1–26 (MADPRRPARVTRYKPPTTESNPALED). At 1-27 (MADPRRPARVTRYKPPTTESNPALEDP) the chain is on the cytoplasmic side. The chain crosses the membrane as a helical span at residues 28 to 46 (TPDYMNLLGMVFSMCGLML). Lysine 47 is a topological domain (lumenal). Residues 48-65 (LKWCAWIAVYCSFISFAN) traverse the membrane as a helical segment. Residues 66-69 (SRSS) are Cytoplasmic-facing. Residues 70-90 (EDTKQMMSSFMLSISAVVMSY) traverse the membrane as a helical segment. Residues 91 to 101 (LQNPQPMSPPW) lie on the Lumenal side of the membrane.

This sequence belongs to the Asterix family. As to quaternary structure, component of the multi-pass translocon (MPT) complex.

Its subcellular location is the endoplasmic reticulum membrane. Functionally, component of the multi-pass translocon (MPT) complex that mediates insertion of multi-pass membrane proteins into the lipid bilayer of membranes. The MPT complex takes over after the SEC61 complex: following membrane insertion of the first few transmembrane segments of proteins by the SEC61 complex, the MPT complex occludes the lateral gate of the SEC61 complex to promote insertion of subsequent transmembrane regions. The polypeptide is PAT complex subunit Asterix (WDR83OS) (Gallus gallus (Chicken)).